The following is a 272-amino-acid chain: Putative phosphoenolpyruvate synthase regulatory protein (272 aa).

152 to 159 (GVSRCGKT) is an ADP binding site.

This sequence belongs to the pyruvate, phosphate/water dikinase regulatory protein family. PSRP subfamily.

It carries out the reaction [pyruvate, water dikinase] + ADP = [pyruvate, water dikinase]-phosphate + AMP + H(+). It catalyses the reaction [pyruvate, water dikinase]-phosphate + phosphate + H(+) = [pyruvate, water dikinase] + diphosphate. In terms of biological role, bifunctional serine/threonine kinase and phosphorylase involved in the regulation of the phosphoenolpyruvate synthase (PEPS) by catalyzing its phosphorylation/dephosphorylation. The protein is Putative phosphoenolpyruvate synthase regulatory protein of Pseudomonas fluorescens (strain Pf0-1).